The primary structure comprises 269 residues: Ribonuclease HII (269 aa).

The RNase H type-2 domain maps to Tyr83–Leu269. Asp89, Glu90, and Asp185 together coordinate a divalent metal cation.

The protein belongs to the RNase HII family. Mn(2+) serves as cofactor. Mg(2+) is required as a cofactor.

The protein localises to the cytoplasm. It catalyses the reaction Endonucleolytic cleavage to 5'-phosphomonoester.. Its function is as follows. Endonuclease that specifically degrades the RNA of RNA-DNA hybrids. The sequence is that of Ribonuclease HII from Clostridium botulinum (strain ATCC 19397 / Type A).